Reading from the N-terminus, the 107-residue chain is uncharacterized protein (107 aa).

The N-terminal stretch at 1-34 (MRLQWPKFITFLSTGSCCLLFLLLPCSFFPLPTA) is a signal peptide.

This is an uncharacterized protein from Saccharomyces cerevisiae (strain ATCC 204508 / S288c) (Baker's yeast).